We begin with the raw amino-acid sequence, 579 residues long: Lens epithelium-derived growth factor (579 aa).

The PWWP domain occupies 1–64 (MSRDFKPGDL…PKDIFPYSEN (64 aa)). 4 disordered regions span residues 62-81 (SENKDKYGKPNKRKGFNEGL), 88-203 (PKVK…EEAA), 215-397 (AAPV…SMDS), and 492-579 (AEQK…FENK). Residues 94 to 107 (HQPSHPAVNTSIKE) show a composition bias toward polar residues. The span at 153 to 173 (KEMHSTKEDEEPSEKNSKEGV) shows a compositional bias: basic and acidic residues. Basic residues predominate over residues 184-193 (VARRGRKRKA). A Nuclear localization signal motif is present at residues 186 to 196 (RRGRKRKAEKQ). Residues 215–224 (AAPVTVSPKV) are compositionally biased toward low complexity. Over residues 261-308 (EEEKAKKKGPDEKPKKQGKKDEEGQKEEEKPKKEYDKKDGKKEAEPKR) the composition is skewed to basic and acidic residues. Residues 321–330 (DSEDEGGEEE) are compositionally biased toward acidic residues. Positions 334–349 (KKKGGRSFQSTHRRNI) are enriched in basic residues. Positions 347-442 (RNIMRGQHEK…SMQQAQKHTE (96 aa)) form a coiled coil. 2 stretches are compositionally biased toward basic and acidic residues: residues 352–397 (GQHE…SMDS) and 492–522 (AEQKQHEEANKTKEQWKKGTNKKNEKEKDQT). The integrase-binding domain (IBD) stretch occupies residues 387 to 464 (MEKKRETSMD…VSQVIMEKST (78 aa)). Over residues 530 to 543 (GSETQDTNQSQHNG) the composition is skewed to polar residues. The span at 544–579 (ENAEEKDKLEVASKKKTCGEESELEKPAKESAFENK) shows a compositional bias: basic and acidic residues.

The protein belongs to the HDGF family.

The protein resides in the nucleus. Transcriptional coactivator involved in neuroepithelial stem cell differentiation and neurogenesis. Involved in particular in lens epithelial cell gene regulation and stress responses. May play an important role in lens epithelial to fiber cell terminal differentiation. May play a protective role during stress-induced apoptosis. This chain is Lens epithelium-derived growth factor (PSIP1), found in Gallus gallus (Chicken).